The primary structure comprises 202 residues: Inner membrane-spanning protein YciB (202 aa).

Transmembrane regions (helical) follow at residues 47–67 (ILLA…WVHF), 75–95 (MLWV…AFQN), 101–121 (WKPT…AFIL), 146–166 (LSWI…AFNF), and 174–194 (FKLF…GMLL).

This sequence belongs to the YciB family.

It is found in the cell inner membrane. Plays a role in cell envelope biogenesis, maintenance of cell envelope integrity and membrane homeostasis. In Dechloromonas aromatica (strain RCB), this protein is Inner membrane-spanning protein YciB.